The chain runs to 188 residues: Elongation factor P (188 aa).

It belongs to the elongation factor P family.

It is found in the cytoplasm. It participates in protein biosynthesis; polypeptide chain elongation. Functionally, involved in peptide bond synthesis. Stimulates efficient translation and peptide-bond synthesis on native or reconstituted 70S ribosomes in vitro. Probably functions indirectly by altering the affinity of the ribosome for aminoacyl-tRNA, thus increasing their reactivity as acceptors for peptidyl transferase. The polypeptide is Elongation factor P (Parabacteroides distasonis (strain ATCC 8503 / DSM 20701 / CIP 104284 / JCM 5825 / NCTC 11152)).